The following is a 370-amino-acid chain: L-lactate oxidase (370 aa).

The 360-residue stretch at 8–367 folds into the FMN hydroxy acid dehydrogenase domain; it reads DPDGMPVTLS…TPDLLTGFSG (360 aa). Tyrosine 34 serves as a coordination point for pyruvate. Residues 87–89, serine 116, and glutamine 136 contribute to the FMN site; that span reads PMA. A pyruvate-binding site is contributed by tyrosine 138. Threonine 164 provides a ligand contact to FMN. Residue arginine 173 participates in pyruvate binding. FMN-binding residues include lysine 238 and serine 260. Residues histidine 262 and arginine 265 each contribute to the pyruvate site. Histidine 262 (proton acceptor) is an active-site residue. FMN-binding positions include 293-297 and arginine 317; that span reads DGGIR.

The protein belongs to the FMN-dependent alpha-hydroxy acid dehydrogenase family. In terms of assembly, homotetramer. The cofactor is FMN.

The enzyme catalyses (S)-lactate + O2 = pyruvate + H2O2. It catalyses the reaction a (2S)-2-hydroxycarboxylate + O2 = a 2-oxocarboxylate + H2O2. It carries out the reaction glycolate + O2 = glyoxylate + H2O2. The catalysed reaction is 2-hydroxyoctadecanoate + O2 = 2-oxooctadecanoate + H2O2. Functionally, catalyzes the oxidation of (S)-lactate (L-lactate) to pyruvate, with a reduction of O2 to H2O2. Is also able to use glycolate and to a lesser extent 2-hydroxyoctadecanoate as substrate. This chain is L-lactate oxidase, found in Roseobacter sp. (strain GAI101).